A 267-amino-acid chain; its full sequence is Eukaryotic translation initiation factor 3 subunit J (267 aa).

Disordered stretches follow at residues 1–128 and 220–241; these read MAPS…DIDL and KMRE…KTKV. Positions 28 to 46 are enriched in acidic residues; the sequence is DEEEEDVLDSWDAAEDSEV. Residues 44-96 adopt a coiled-coil conformation; it reads SEVEREKAAKAAAAAAKAEAEAAAKKKSKAQRIEEHKQERKKQAEANESDEDS. Basic and acidic residues predominate over residues 74 to 88; sequence QRIEEHKQERKKQAE. Residues 90 to 100 are compositionally biased toward acidic residues; that stretch reads NESDEDSDEDE. Basic and acidic residues-rich tracts occupy residues 108–121 and 220–231; these read RRTE…HAQD and KMREERAADKGN.

Belongs to the eIF-3 subunit J family. In terms of assembly, component of the eukaryotic translation initiation factor 3 (eIF-3) complex.

Its subcellular location is the cytoplasm. Component of the eukaryotic translation initiation factor 3 (eIF-3) complex, which is involved in protein synthesis of a specialized repertoire of mRNAs and, together with other initiation factors, stimulates binding of mRNA and methionyl-tRNAi to the 40S ribosome. The eIF-3 complex specifically targets and initiates translation of a subset of mRNAs involved in cell proliferation. In Neosartorya fischeri (strain ATCC 1020 / DSM 3700 / CBS 544.65 / FGSC A1164 / JCM 1740 / NRRL 181 / WB 181) (Aspergillus fischerianus), this protein is Eukaryotic translation initiation factor 3 subunit J (hcr1).